A 159-amino-acid chain; its full sequence is 6,7-dimethyl-8-ribityllumazine synthase (159 aa).

5-amino-6-(D-ribitylamino)uracil contacts are provided by residues Trp-26, 58 to 60 (SFE), and 80 to 82 (VVI). 85 to 86 (GT) contributes to the (2S)-2-hydroxy-3-oxobutyl phosphate binding site. The active-site Proton donor is the His-88. Phe-113 lines the 5-amino-6-(D-ribitylamino)uracil pocket. Arg-127 serves as a coordination point for (2S)-2-hydroxy-3-oxobutyl phosphate.

This sequence belongs to the DMRL synthase family.

The catalysed reaction is (2S)-2-hydroxy-3-oxobutyl phosphate + 5-amino-6-(D-ribitylamino)uracil = 6,7-dimethyl-8-(1-D-ribityl)lumazine + phosphate + 2 H2O + H(+). It participates in cofactor biosynthesis; riboflavin biosynthesis; riboflavin from 2-hydroxy-3-oxobutyl phosphate and 5-amino-6-(D-ribitylamino)uracil: step 1/2. Catalyzes the formation of 6,7-dimethyl-8-ribityllumazine by condensation of 5-amino-6-(D-ribitylamino)uracil with 3,4-dihydroxy-2-butanone 4-phosphate. This is the penultimate step in the biosynthesis of riboflavin. This is 6,7-dimethyl-8-ribityllumazine synthase from Renibacterium salmoninarum (strain ATCC 33209 / DSM 20767 / JCM 11484 / NBRC 15589 / NCIMB 2235).